The primary structure comprises 312 residues: MQGEIIAGFLAPHPPHLVYGENPPQNEPRSQGGWEVLRWAYERARERLDAMKPDVLLVHSPHWITSVGHHFLGVPELSGKSVDPIFPNVFRYDFSLNVDVELAEACAEEGRKAGLVTKMMRNPKFRVDYGTITTLHLIRPQWDIPVVGISANNSPYYLNTKEGMSEMDVLGKATREAIRKTGRKAVLLASNTLSHWHFHEEPTIPEDMSKEYPATMAGYQWDIRMIELMRQGKTSEVFKLLPQFIDEAFAEVKSGAFTWMHAAMQYPELAAELFGYGTVIGTGNAVMEWDLRKAGLSMLGAADQKQRSAAVA.

Fe cation contacts are provided by histidine 13, histidine 62, and glutamate 251.

It belongs to the LigB/MhpB extradiol dioxygenase family. In terms of assembly, the APD complex is a heterotetramer of 2 alpha (CnbCa) and 2 beta (CnbCb) subunits. Fe(2+) is required as a cofactor.

The enzyme catalyses 2-aminophenol + O2 = 2-aminomuconate 6-semialdehyde. It carries out the reaction 2-amino-5-chlorophenol + O2 = 2-amino-5-chloromuconate 6-semialdehyde. It functions in the pathway xenobiotic degradation; nitrobenzene degradation. Its pathway is xenobiotic degradation; 4-chloronitrobenzene degradation. With respect to regulation, complete loss of activity in the presence of Ni(2+), Co(2+), Cd(2+), Zn(2+) and hydrogen peroxide, however activity with hydrogen peroxide partially restored upon addition of excess ascorbate. Partially inhibited by Fe(2+), Mg(2+), Ca(2+), Mn(2+), Cu(2+) and also by EDTA, at 2 mM concentration. Total activity inhibited in the presence of catechol or 4-nitrocatechol but completely restored after removal of catechol and addition of 2 mM Fe(2+) and 5 mM ascorbate. Its function is as follows. Component of the 2-aminophenol 1,6-dioxygenase (APD) complex that catalyzes the ring fission of 2-aminophenol to produce 2-aminomuconic semialdehyde. CnbCb seems to be the catalytic subunit of the complex. Also active on other substrates such as 2-amino-5-chlorophenol (68% activity), protocatechuate (33% activity) and catechol (5% activity). Both 2-aminophenol and 2-amino-5-cholorophenol are likely native substrates for this dioxygenase which is involved in the reductive degradation pathway of both nitrobenzene (NB) and 4-chloronitrobenzene (4-CNB), allowing C.testosteroni strain CNB-1 to grow on these compounds as sole source of carbon, nitrogen, and energy. The polypeptide is 2-aminophenol 1,6-dioxygenase subunit beta (Comamonas testosteroni (Pseudomonas testosteroni)).